The following is a 166-amino-acid chain: Small ribosomal subunit protein eS10 (166 aa).

The interval 95 to 166 (RRQTRPETAR…FGRGRGQQPQ (72 aa)) is disordered. The segment covering 98 to 129 (TRPETARPRPKGLEGERPARLARGEGDRDAYR) has biased composition (basic and acidic residues). Low complexity predominate over residues 143–154 (AGAGAATEFQFR). Gly residues predominate over residues 155-166 (GGFGRGRGQQPQ).

Belongs to the eukaryotic ribosomal protein eS10 family. Component of the small ribosomal subunit.

It localises to the cytoplasm. The protein resides in the nucleus. The protein localises to the nucleolus. Component of the 40S ribosomal subunit. The ribosome is a large ribonucleoprotein complex responsible for the synthesis of proteins in the cell. The sequence is that of Small ribosomal subunit protein eS10 (rps10) from Ictalurus punctatus (Channel catfish).